A 101-amino-acid chain; its full sequence is Urease subunit beta (101 aa).

Belongs to the urease beta subunit family. As to quaternary structure, heterotrimer of UreA (gamma), UreB (beta) and UreC (alpha) subunits. Three heterotrimers associate to form the active enzyme.

The protein resides in the cytoplasm. It carries out the reaction urea + 2 H2O + H(+) = hydrogencarbonate + 2 NH4(+). The protein operates within nitrogen metabolism; urea degradation; CO(2) and NH(3) from urea (urease route): step 1/1. The protein is Urease subunit beta of Stutzerimonas stutzeri (strain A1501) (Pseudomonas stutzeri).